The following is a 146-amino-acid chain: Snaclec alboaggregin-B subunit beta (146 aa).

The first 23 residues, 1–23 (MGRFIFGSFGLLVLFLSLSGTGA), serve as a signal peptide directing secretion. Residues 24–143 (DCPSDWSSYD…CSRTYPFVCK (120 aa)) form the C-type lectin domain. 3 disulfide bridges follow: Cys-25–Cys-36, Cys-53–Cys-142, and Cys-119–Cys-134.

The protein belongs to the snaclec family. As to quaternary structure, heterodimer of subunits alpha and beta; disulfide-linked. Expressed by the venom gland.

The protein resides in the secreted. Weakly agglutinates platelets at high doses by binding to GPIbalpha (GP1BA). The protein is Snaclec alboaggregin-B subunit beta of Trimeresurus albolabris (White-lipped pit viper).